A 453-amino-acid polypeptide reads, in one-letter code: tRNA modification GTPase MnmE (453 aa).

Residues arginine 22, glutamate 79, and lysine 119 each contribute to the (6S)-5-formyl-5,6,7,8-tetrahydrofolate site. The TrmE-type G domain maps to 215 to 376 (GMKVVIAGRP…LKQHLKSLMG (162 aa)). Residue asparagine 225 coordinates K(+). Residues 225–230 (NAGKSS), 244–250 (TDIAGTT), 269–272 (DTAG), and 334–337 (NKAD) each bind GTP. Serine 229 contributes to the Mg(2+) binding site. K(+)-binding residues include threonine 244, isoleucine 246, and threonine 249. Residue threonine 250 coordinates Mg(2+). Lysine 453 contributes to the (6S)-5-formyl-5,6,7,8-tetrahydrofolate binding site.

Belongs to the TRAFAC class TrmE-Era-EngA-EngB-Septin-like GTPase superfamily. TrmE GTPase family. As to quaternary structure, homodimer. Heterotetramer of two MnmE and two MnmG subunits. K(+) serves as cofactor.

Its subcellular location is the cytoplasm. Its function is as follows. Exhibits a very high intrinsic GTPase hydrolysis rate. Involved in the addition of a carboxymethylaminomethyl (cmnm) group at the wobble position (U34) of certain tRNAs, forming tRNA-cmnm(5)s(2)U34. This chain is tRNA modification GTPase MnmE, found in Shewanella amazonensis (strain ATCC BAA-1098 / SB2B).